Consider the following 291-residue polypeptide: MGSCGAVGSVRARYLVFLQYLGTDFNGVAAVRGNPRAVGVLNFLEEAAKRLNSVDPVRFTISSRTDAGVHALSNAAHLDIQRRPGQSPFSPEVVAKALNTHLKHPAIRVLKAFRVPNDFHARHAATSRTYQYRLATGCSWPNQLPVFEQNVCWALQTEYLDMAAMQEAAQHLLGTHDFSAFQSAGSPVTNTVRTLRRVSVSPGPASPFVLPEGSRRLQFWTLEFESQSFLYRQVRRMTAVLVAVGLGILAPTQVKVILESQDPLGKYQARVAPARGLFLKSVLYDNFGPTS.

Catalysis depends on Asp-66, which acts as the Nucleophile. Position 130 (Tyr-130) interacts with substrate.

It belongs to the tRNA pseudouridine synthase TruA family.

It catalyses the reaction a uridine in tRNA = a pseudouridine in tRNA. The polypeptide is tRNA pseudouridine synthase-like 1 (Pusl1) (Mus musculus (Mouse)).